The sequence spans 389 residues: MSMLGERRRGLTDPEMAAVILKALPEAPLDGNNKMGYFVTPRWKRLTEYEALTVYAQPNADWIAGGLDWGDWTQKFHGGRPSWGNETTELRTVDWFKHRDPLRRWHAPYVKDKAEEWRYTDRFLQGYSADGQIRAMNPTWRDEFINRYWGAFLFNEYGLFNAHSQGAREALSDVTRVSLAFWGFDKIDIAQMIQLERGFLAKIVPGFDESTAVPKAEWTNGEVYKSARLAVEGLWQEVFDWNESAFSVHAVYDALFGQFVRREFFQRLAPRFGDNLTPFFINQAQTYFQIAKQGVQDLYYNCLGDDPEFSDYNRTVMRNWTGKWLEPTIAALRDFMGLFAKLPAGTTDKEEITASLYRVVDDWIEDYASRIDFKADRDQIVKAVLAGLK.

As to quaternary structure, m.capsulatus has two forms of methane monooxygenase, a soluble and a membrane-bound type. The soluble type consists of four components (A to D): protein A, comprising three chains, in an alpha-2, beta-2, gamma-2 configuration, is a nonheme iron protein containing an unusual mu-hydroxo bridge structure at its active site and interacts with both oxygen and methane.

The enzyme catalyses methane + NADH + O2 + H(+) = methanol + NAD(+) + H2O. It catalyses the reaction methane + NADPH + O2 + H(+) = methanol + NADP(+) + H2O. In terms of biological role, responsible for the initial oxygenation of methane to methanol in methanotrophs. It also catalyzes the monohydroxylation of a variety of unactivated alkenes, alicyclic, aromatic and heterocyclic compounds. In Methylococcus capsulatus (strain ATCC 33009 / NCIMB 11132 / Bath), this protein is Methane monooxygenase component A beta chain (mmoY).